We begin with the raw amino-acid sequence, 703 residues long: Cyclomaltodextrin glucanotransferase (703 aa).

An N-terminal signal peptide occupies residues methionine 1–alanine 29. Residues aspartate 30–proline 160 form an A1 region. Residues aspartate 52, asparagine 54, asparagine 57, and asparagine 58 each contribute to the Ca(2+) site. An intrachain disulfide couples cysteine 68 to cysteine 75. Positions 76 and 78 each coordinate Ca(2+). Position 122–123 (tyrosine 122–tryptophan 123) interacts with substrate. Asparagine 161 is a binding site for Ca(2+). The interval asparagine 161 to leucine 224 is b. Histidine 162 is a substrate binding site. Isoleucine 212 is a Ca(2+) binding site. Asparagine 215–aspartate 218 provides a ligand contact to substrate. Residue aspartate 221 participates in Ca(2+) binding. The interval asparagine 225 to tyrosine 428 is A2. Arginine 249 contacts substrate. Aspartate 251 functions as the Nucleophile in the catalytic mechanism. Lysine 254 to histidine 255 lines the substrate pocket. Histidine 255 is a Ca(2+) binding site. The active-site Proton donor is glutamate 279. Substrate is bound by residues histidine 349, aspartate 393, and arginine 397. The segment at glycine 429–proline 516 is c. Positions serine 517–leucine 600 are d. In terms of domain architecture, IPT/TIG spans proline 520 to glutamate 598. One can recognise a CBM20 domain in the interval valine 599–tryptophan 703. The interval serine 601 to tryptophan 703 is e.

It belongs to the glycosyl hydrolase 13 family. Monomer. Ca(2+) is required as a cofactor.

The protein localises to the secreted. It catalyses the reaction Cyclizes part of a (1-&gt;4)-alpha-D-glucan chain by formation of a (1-&gt;4)-alpha-D-glucosidic bond.. The protein is Cyclomaltodextrin glucanotransferase (cgt) of Bacillus sp. (strain 1-1).